Consider the following 185-residue polypeptide: Elongation factor P (185 aa).

It belongs to the elongation factor P family.

Its subcellular location is the cytoplasm. The protein operates within protein biosynthesis; polypeptide chain elongation. Involved in peptide bond synthesis. Stimulates efficient translation and peptide-bond synthesis on native or reconstituted 70S ribosomes in vitro. Probably functions indirectly by altering the affinity of the ribosome for aminoacyl-tRNA, thus increasing their reactivity as acceptors for peptidyl transferase. The protein is Elongation factor P of Burkholderia multivorans (strain ATCC 17616 / 249).